Reading from the N-terminus, the 47-residue chain is Exoenzymes regulatory protein AepH (47 aa).

Composition is skewed to basic and acidic residues over residues 1-17 (MGQE…QDGH) and 33-47 (TKKE…DANV). Positions 1-47 (MGQEPKGIESRKIQDGHVRKKVGRQQGLWVRTTKKEKFSRMSRDANV) are disordered.

Involved in the control of extracellular enzymes production. Stimulates PEL, PEH, CEL, and PRT production. The chain is Exoenzymes regulatory protein AepH (aepH) from Pectobacterium carotovorum subsp. carotovorum (Erwinia carotovora subsp. carotovora).